Consider the following 378-residue polypeptide: S-(hydroxymethyl)glutathione dehydrogenase (378 aa).

Cys-49, His-71, Cys-101, Cys-104, Cys-107, Cys-115, and Cys-178 together coordinate Zn(2+).

The protein belongs to the zinc-containing alcohol dehydrogenase family. Class-III subfamily. In terms of assembly, homodimer. Zn(2+) serves as cofactor.

It is found in the cytoplasm. It catalyses the reaction S-(hydroxymethyl)glutathione + NADP(+) = S-formylglutathione + NADPH + H(+). The catalysed reaction is S-(hydroxymethyl)glutathione + NAD(+) = S-formylglutathione + NADH + H(+). The enzyme catalyses a primary alcohol + NAD(+) = an aldehyde + NADH + H(+). It carries out the reaction a secondary alcohol + NAD(+) = a ketone + NADH + H(+). It catalyses the reaction S-nitrosoglutathione + NADH + H(+) = S-(hydroxysulfenamide)glutathione + NAD(+). In terms of biological role, has high formaldehyde dehydrogenase activity in the presence of glutathione and catalyzes the oxidation of normal alcohols in a reaction that is not GSH-dependent. In addition, hemithiolacetals other than those formed from GSH, including omega-thiol fatty acids, also are substrates. Also acts as a S-nitroso-glutathione reductase by catalyzing the NADH-dependent reduction of S-nitrosoglutathione. The polypeptide is S-(hydroxymethyl)glutathione dehydrogenase (frmA) (Haemophilus influenzae (strain ATCC 51907 / DSM 11121 / KW20 / Rd)).